Consider the following 257-residue polypeptide: Thioredoxin-dependent peroxide reductase, mitochondrial (257 aa).

The transit peptide at Met-1 to His-62 directs the protein to the mitochondrion. Residues Pro-64 to Phe-222 enclose the Thioredoxin domain. The residue at position 84 (Lys-84) is an N6-succinyllysine. Lys-92 carries the post-translational modification N6-acetyllysine; alternate. Lys-92 bears the N6-succinyllysine; alternate mark. The active-site Cysteine sulfenic acid (-SOH) intermediate is Cys-109. Residue Thr-147 is modified to Phosphothreonine.

This sequence belongs to the peroxiredoxin family. AhpC/Prx1 subfamily. In terms of assembly, homodimer; disulfide-linked, upon oxidation. 6 homodimers assemble to form a ring-like dodecamer. Interacts with NEK6. Interacts with LRRK2. Interacts with MAP3K13. Interacts with RPS6KC1 (via PX domain). Phosphorylated by LRRK2; phosphorylation reduces perodixase activity. In terms of processing, the enzyme can be inactivated by further oxidation of the cysteine sulfenic acid (C(P)-SOH) to sulphinic acid (C(P)-SO2H) and sulphonic acid (C(P)-SO3H) instead of its condensation to a disulfide bond. Post-translationally, S-palmitoylated. Ubiquitous.

It is found in the mitochondrion. It localises to the cytoplasm. The protein resides in the early endosome. The catalysed reaction is a hydroperoxide + [thioredoxin]-dithiol = an alcohol + [thioredoxin]-disulfide + H2O. Its function is as follows. Thiol-specific peroxidase that catalyzes the reduction of hydrogen peroxide and organic hydroperoxides to water and alcohols, respectively. Plays a role in cell protection against oxidative stress by detoxifying peroxides. Acts synergistically with MAP3K13 to regulate the activation of NF-kappa-B in the cytosol. Required for the maintenance of physical strength. This Rattus norvegicus (Rat) protein is Thioredoxin-dependent peroxide reductase, mitochondrial (Prdx3).